The chain runs to 335 residues: Probable BOI-related E3 ubiquitin-protein ligase 3 (335 aa).

The tract at residues 196-232 (LEEKVKSLCVENQIWRDVAQSNEATVNALRSNLQQVL) is WRD domain. The segment at 287–322 (CRSCGKGEASVLLLPCRHMCLCSVCGSSLNTCPICK) adopts an RING-type zinc-finger fold.

In terms of assembly, interacts with the DELLA proteins GAI, RGA, RGL1, RGL2 and RGL3.

The enzyme catalyses S-ubiquitinyl-[E2 ubiquitin-conjugating enzyme]-L-cysteine + [acceptor protein]-L-lysine = [E2 ubiquitin-conjugating enzyme]-L-cysteine + N(6)-ubiquitinyl-[acceptor protein]-L-lysine.. The protein operates within protein degradation; proteasomal ubiquitin-dependent pathway. Probable E3 ubiquitin-protein ligase. Has no effect on the stability of the DELLA proteins. This chain is Probable BOI-related E3 ubiquitin-protein ligase 3 (BRG3), found in Arabidopsis thaliana (Mouse-ear cress).